The chain runs to 175 residues: DDTNAPLCLCDEPGILGRKEFVSDATKTIIEKAVEEVAKEGGVSGRGFSLFSHHPVFRECGKYECRTVRPEHSRCYNFPPFIHFKSECPVSTRDCEPVFGYTAAGEFRVIVQAPRAGFRQCVWQHKCRYGSNNCGFNGRCTQQRSVVRLVTFNLEKNGFLCETFRTCCGCPCRSF.

8 disulfides stabilise this stretch: cysteine 8/cysteine 167, cysteine 10/cysteine 95, cysteine 60/cysteine 161, cysteine 65/cysteine 121, cysteine 75/cysteine 168, cysteine 88/cysteine 140, cysteine 127/cysteine 170, and cysteine 134/cysteine 172.

This sequence belongs to the coagulin family. As to quaternary structure, coagulogen is cleaved after Arg-18 and Arg-46 by a clotting enzyme contained in the hemocyte and activated by a bacterial endotoxin (lipopolysaccharide). This cleavage releases the peptide C and leaves 2 chains of coagulin, A and B, linked by two disulfide bonds. Coagulin molecules interlink to form a gel. As to expression, hemolymph.

The protein localises to the secreted. Coagulogen is a gel-forming protein of hemolymph; it hinders the spread of invaders by immobilizing them. The polypeptide is Coagulogen (Tachypleus gigas (Southeast Asian horseshoe crab)).